We begin with the raw amino-acid sequence, 166 residues long: S-phase kinase-associated protein 1 homolog (166 aa).

The segment at 105-166 (ILAANYLDIK…ENKWAEEATS (62 aa)) is interaction with the F-box domain of F-box proteins.

The protein belongs to the SKP1 family. In terms of assembly, component of multiple SCF (SKP1-CUL1-F-box) E3 ubiquitin-protein ligase complexes formed of CUL1, SKP1, RBX1 and a variable F-box domain-containing protein as substrate-specific subunit.

Its pathway is protein modification; protein ubiquitination. In terms of biological role, essential component of the SCF (SKP1-CUL1-F-box protein) ubiquitin ligase complex, which mediates the ubiquitination of proteins involved in cell cycle progression, signal transduction and transcription. In the SCF complex, serves as an adapter that links the F-box protein to CUL1. The functional specificity of the SCF complex depends on the F-box protein as substrate recognition component. Its association with the holoenzyme telomerase ribonucleoprotein complex suggests that it may play a role in turnover of holoenzyme telomerase complex components. This Tetrahymena thermophila (strain SB210) protein is S-phase kinase-associated protein 1 homolog.